The following is a 295-amino-acid chain: MSKPRKQHGVVVGVDGSLESDAAACWGATDAAMRNIPLTVVHVVNADVATWPPMPYPETWGVWQEDEGRQIVANAVKLAKEAVGADRKLSVKSELVFSTPVPTMVEISNEAEMVVLGSSGRGALARGLLGSVSSSLVRRAGCPVAVIHSDDAVIPDPQHAPVLVGIDGSPVSELATAVAFDEASRRGVELIAVHAWSDVEVVELPGLDFSAVQQEAELSLAERLAGWQERYPDVPVSRVVVCDRPARKLVQKSASAQLVVVGSHGRGGLTGMLLGSVSNAVLHAARVPVIVARQS.

Residues Gly-13, 117 to 123 (GSSGRGA), 131 to 132 (SV), Gly-165, Asp-198, 262 to 268 (GSHGRGG), and 276 to 278 (SVS) each bind ATP.

The protein belongs to the universal stress protein A family.

The protein is Universal stress protein Mb2028c of Mycobacterium bovis (strain ATCC BAA-935 / AF2122/97).